The chain runs to 488 residues: NADH-quinone oxidoreductase subunit N (488 aa).

14 helical membrane-spanning segments follow: residues 15–35, 42–62, 79–99, 108–128, 133–153, 168–188, 209–229, 243–263, 277–297, 305–325, 333–353, 376–396, 409–429, and 456–476; these read LALPEIWMLVMACVVLVVDLY, GMTFMLTQFTLVVAGVLAIVA, NLAAVLKVAIAGLGFLSFAYC, LLKGEYFVLGLFSLLGMMIMA, LMTVYLGLELLALTLYAMVAF, FVLGAIASGILLYGMSLIYGA, WLLLLGMTLVVVGVAFKFGAV, PTTVALFASTAPKVAAVALFV, WQPMIILLAVASLVVGNLAAL, MLAYSTASHVGFILLGFIAGT, LFYAITYGIMSAGAFGLIILL, MALMMLLLMFSMTGIPGTVGF, VGLVWLAVFAVVFAVIGAFYY, and GLLVANGIAVLLLGIFPDSLI.

Belongs to the complex I subunit 2 family. NDH-1 is composed of 14 different subunits. Subunits NuoA, H, J, K, L, M, N constitute the membrane sector of the complex.

Its subcellular location is the cell inner membrane. It catalyses the reaction a quinone + NADH + 5 H(+)(in) = a quinol + NAD(+) + 4 H(+)(out). Functionally, NDH-1 shuttles electrons from NADH, via FMN and iron-sulfur (Fe-S) centers, to quinones in the respiratory chain. The immediate electron acceptor for the enzyme in this species is believed to be ubiquinone. Couples the redox reaction to proton translocation (for every two electrons transferred, four hydrogen ions are translocated across the cytoplasmic membrane), and thus conserves the redox energy in a proton gradient. This chain is NADH-quinone oxidoreductase subunit N, found in Alkalilimnicola ehrlichii (strain ATCC BAA-1101 / DSM 17681 / MLHE-1).